A 75-amino-acid polypeptide reads, in one-letter code: Protein B7 (75 aa).

This chain is Protein B7 (B7), found in Human herpesvirus 6B (strain Z29) (HHV-6 variant B).